A 139-amino-acid polypeptide reads, in one-letter code: Peptide methionine sulfoxide reductase MsrB (139 aa).

The 123-residue stretch at 9–131 (TPSDNTEMTE…NSASLSFIDD (123 aa)) folds into the MsrB domain. Zn(2+)-binding residues include C48, C51, C97, and C100. C120 serves as the catalytic Nucleophile.

The protein belongs to the MsrB Met sulfoxide reductase family. Zn(2+) is required as a cofactor.

The catalysed reaction is L-methionyl-[protein] + [thioredoxin]-disulfide + H2O = L-methionyl-(R)-S-oxide-[protein] + [thioredoxin]-dithiol. The chain is Peptide methionine sulfoxide reductase MsrB from Pectobacterium atrosepticum (strain SCRI 1043 / ATCC BAA-672) (Erwinia carotovora subsp. atroseptica).